We begin with the raw amino-acid sequence, 323 residues long: uncharacterized protein (323 aa).

Transmembrane regions (helical) follow at residues phenylalanine 8–glutamate 28, leucine 32–leucine 52, and isoleucine 92–phenylalanine 112.

It localises to the mitochondrion membrane. This is an uncharacterized protein from Neurospora crassa (strain ATCC 24698 / 74-OR23-1A / CBS 708.71 / DSM 1257 / FGSC 987).